Here is a 214-residue protein sequence, read N- to C-terminus: Proteasome subunit beta (214 aa).

Positions 1-11 are cleaved as a propeptide — removed in mature form; by autocatalysis; the sequence is MLDTSQEIMKG. Thr-12 (nucleophile) is an active-site residue.

The protein belongs to the peptidase T1B family. As to quaternary structure, the 20S proteasome core is composed of 14 alpha and 14 beta subunits that assemble into four stacked heptameric rings, resulting in a barrel-shaped structure. The two inner rings, each composed of seven catalytic beta subunits, are sandwiched by two outer rings, each composed of seven alpha subunits. The catalytic chamber with the active sites is on the inside of the barrel. Has a gated structure, the ends of the cylinder being occluded by the N-termini of the alpha-subunits. Is capped at one or both ends by the proteasome regulatory ATPase, PAN.

It is found in the cytoplasm. The enzyme catalyses Cleavage of peptide bonds with very broad specificity.. Its activity is regulated as follows. The formation of the proteasomal ATPase PAN-20S proteasome complex, via the docking of the C-termini of PAN into the intersubunit pockets in the alpha-rings, triggers opening of the gate for substrate entry. Interconversion between the open-gate and close-gate conformations leads to a dynamic regulation of the 20S proteasome proteolysis activity. Its function is as follows. Component of the proteasome core, a large protease complex with broad specificity involved in protein degradation. The chain is Proteasome subunit beta from Methanoculleus marisnigri (strain ATCC 35101 / DSM 1498 / JR1).